A 651-amino-acid chain; its full sequence is Acetyl-coenzyme A synthetase (651 aa).

CoA is bound by residues 191–194, T311, and N335; that span reads RGGK. ATP-binding positions include 387-389, 411-416, D500, and R515; these read GEP and DTWWQT. S523 is a binding site for CoA. R526 contacts ATP. Mg(2+)-binding residues include V537, H539, and V542. CoA is bound at residue R584. K609 is subject to N6-acetyllysine.

It belongs to the ATP-dependent AMP-binding enzyme family. Mg(2+) is required as a cofactor. Post-translationally, acetylated. Deacetylation by the SIR2-homolog deacetylase activates the enzyme.

It carries out the reaction acetate + ATP + CoA = acetyl-CoA + AMP + diphosphate. In terms of biological role, catalyzes the conversion of acetate into acetyl-CoA (AcCoA), an essential intermediate at the junction of anabolic and catabolic pathways. AcsA undergoes a two-step reaction. In the first half reaction, AcsA combines acetate with ATP to form acetyl-adenylate (AcAMP) intermediate. In the second half reaction, it can then transfer the acetyl group from AcAMP to the sulfhydryl group of CoA, forming the product AcCoA. This is Acetyl-coenzyme A synthetase from Pseudomonas syringae pv. syringae (strain B728a).